The following is a 149-amino-acid chain: MADQLTEEQIAEFKEAFSLFDKDGDGTITTKELGTVMRSLGQNPTEAELQDMINEVDADGDGTIDFPEFLTMMARKMKDTDSEEEIREAFRVFDKDGNGFISAAELRHVMTNLGEKLTDEEVDEMIREADIDGDGQVNYEEFVTMMTSK.

Residue Ala-2 is modified to N-acetylalanine. 4 EF-hand domains span residues 8 to 43 (EQIA…LGQN), 44 to 79 (PTEA…KMKD), 81 to 116 (DSEE…LGEK), and 117 to 149 (LTDE…MTSK). 14 residues coordinate Ca(2+): Asp-21, Asp-23, Asp-25, Thr-27, Glu-32, Asp-57, Asp-59, Asp-61, Thr-63, Glu-68, Asp-94, Asp-96, Asn-98, and Glu-105. N6,N6,N6-trimethyllysine is present on Lys-116. Ca(2+) is bound by residues Asp-130, Asp-132, Asp-134, Gln-136, and Glu-141.

It belongs to the calmodulin family.

Its function is as follows. Calmodulin mediates the control of a large number of enzymes, ion channels and other proteins by Ca(2+). Among the enzymes to be stimulated by the calmodulin-Ca(2+) complex are a number of protein kinases and phosphatases. The polypeptide is Calmodulin (Pyuridae sp. (Sea squirt)).